Reading from the N-terminus, the 248-residue chain is Small ribosomal subunit protein uS3 (248 aa).

Residues isoleucine 39 to lysine 111 form the KH type-2 domain. The interval lysine 222–asparagine 248 is disordered.

This sequence belongs to the universal ribosomal protein uS3 family. As to quaternary structure, part of the 30S ribosomal subunit. Forms a tight complex with proteins S10 and S14.

Its function is as follows. Binds the lower part of the 30S subunit head. Binds mRNA in the 70S ribosome, positioning it for translation. The sequence is that of Small ribosomal subunit protein uS3 from Alteracholeplasma palmae (strain ATCC 49389 / J233) (Acholeplasma palmae).